We begin with the raw amino-acid sequence, 198 residues long: MTKVLVLYYSMYGHIETMARAVAEGASKVDGAEVVVKRVPETMPPQLFEKAGGKTQTAPVATPQELADYDAIIFGTPTRFGNMSGQMRTFLDQTGGLWASGALYGKLASVFSSTGTGGGQEQTITSTWTTLAHHGMVIVPIGYAAQELFDVSQVRGGTPYGATTIAGGDGSRQPSQEELSIARYQGEYVAGLAVKLNG.

In terms of domain architecture, Flavodoxin-like spans 4-189 (VLVLYYSMYG…SIARYQGEYV (186 aa)). FMN is bound by residues 10–15 (SMYGHI) and 78–80 (TRF). Tyr12 is an NAD(+) binding site. Trp98 contacts substrate. FMN is bound by residues 113–118 (STGTGG) and His133.

The protein belongs to the WrbA family. It depends on FMN as a cofactor.

The enzyme catalyses a quinone + NADH + H(+) = a quinol + NAD(+). It carries out the reaction a quinone + NADPH + H(+) = a quinol + NADP(+). In Shigella dysenteriae serotype 1 (strain Sd197), this protein is NAD(P)H dehydrogenase (quinone).